Here is a 333-residue protein sequence, read N- to C-terminus: Homocysteine S-methyltransferase 2 (333 aa).

The region spanning 8–327 (SMKDFLKQTG…TTIRAIHKRL (320 aa)) is the Hcy-binding domain. Zn(2+) contacts are provided by cysteine 245, cysteine 312, and cysteine 313.

Monomer. Zn(2+) is required as a cofactor. As to expression, expressed predominantly in roots. Expressed in rosette leaves, cauline leaves and developing seeds.

It carries out the reaction S-methyl-L-methionine + L-homocysteine = 2 L-methionine + H(+). Functionally, catalyzes methyl transfer from S-methylmethionine (SMM) to adenosyl-L-homocysteine (AdoMet). SMM degradation (by HMT-1, HMT-2 and HMT-3) and biosynthesis (by MMT1) constitute the SMM cycle in plants, which is probably required to achieve short term control of AdoMet level. The protein is Homocysteine S-methyltransferase 2 (HMT-2) of Arabidopsis thaliana (Mouse-ear cress).